The primary structure comprises 469 residues: Neuraminidase (469 aa).

Over 1-9 (MNPNQKIIT) the chain is Intravirion. Residues 10–30 (IGSVSLIIATICFLMQIAILV) form a helical membrane-spanning segment. The interval 11–33 (GSVSLIIATICFLMQIAILVTTV) is involved in apical transport and lipid raft association. Over 31–469 (TTVTLHFKQY…DGADINLMPI (439 aa)) the chain is Virion surface. The tract at residues 36-88 (HFKQYECDSPANNQVMPCEPIIIERNITEIVYLTNTTIEKEICPKLVEYRNWS) is hypervariable stalk region. N-linked (GlcNAc...) asparagine; by host glycosylation is found at Asn-61, Asn-70, and Asn-86. The segment at 91–469 (QCKITGFAPF…DGADINLMPI (379 aa)) is head of neuraminidase. Intrachain disulfides connect Cys-92-Cys-417, Cys-124-Cys-129, Cys-183-Cys-230, Cys-232-Cys-237, Cys-278-Cys-291, Cys-280-Cys-289, Cys-318-Cys-337, and Cys-421-Cys-447. Arg-118 contributes to the substrate binding site. Asn-146 carries an N-linked (GlcNAc...) asparagine; by host glycan. Asp-151 functions as the Proton donor/acceptor in the catalytic mechanism. Position 152 (Arg-152) interacts with substrate. Residues Asn-200 and Asn-234 are each glycosylated (N-linked (GlcNAc...) asparagine; by host). 276 to 277 (EE) lines the substrate pocket. Position 292 (Arg-292) interacts with substrate. Ca(2+) contacts are provided by Asp-293, Gly-297, and Asp-324. Arg-371 contributes to the substrate binding site. Asn-402 carries N-linked (GlcNAc...) asparagine; by host glycosylation. The active-site Nucleophile is the Tyr-406.

Belongs to the glycosyl hydrolase 34 family. In terms of assembly, homotetramer. Ca(2+) is required as a cofactor. Post-translationally, N-glycosylated.

Its subcellular location is the virion membrane. It is found in the host apical cell membrane. It catalyses the reaction Hydrolysis of alpha-(2-&gt;3)-, alpha-(2-&gt;6)-, alpha-(2-&gt;8)- glycosidic linkages of terminal sialic acid residues in oligosaccharides, glycoproteins, glycolipids, colominic acid and synthetic substrates.. Inhibited by the neuraminidase inhibitors zanamivir (Relenza) and oseltamivir (Tamiflu). These drugs interfere with the release of progeny virus from infected cells and are effective against all influenza strains. Resistance to neuraminidase inhibitors is quite rare. Catalyzes the removal of terminal sialic acid residues from viral and cellular glycoconjugates. Cleaves off the terminal sialic acids on the glycosylated HA during virus budding to facilitate virus release. Additionally helps virus spread through the circulation by further removing sialic acids from the cell surface. These cleavages prevent self-aggregation and ensure the efficient spread of the progeny virus from cell to cell. Otherwise, infection would be limited to one round of replication. Described as a receptor-destroying enzyme because it cleaves a terminal sialic acid from the cellular receptors. May facilitate viral invasion of the upper airways by cleaving the sialic acid moieties on the mucin of the airway epithelial cells. Likely to plays a role in the budding process through its association with lipid rafts during intracellular transport. May additionally display a raft-association independent effect on budding. Plays a role in the determination of host range restriction on replication and virulence. Sialidase activity in late endosome/lysosome traffic seems to enhance virus replication. This chain is Neuraminidase, found in Aves (whales).